A 257-amino-acid polypeptide reads, in one-letter code: Zinc transporter ZupT (257 aa).

5 helical membrane-spanning segments follow: residues 5–25, 32–52, 61–81, 109–129, and 137–157; these read LILT…AVLG, VLAF…LMEM, GMSP…YFGL, AILL…ATFV, and LGMG…LAVA. 2 residues coordinate Fe(2+): asparagine 120 and glutamate 123. Zn(2+)-binding residues include glutamate 123 and histidine 148. Fe(2+) is bound by residues asparagine 149, glutamate 152, and glutamate 181. Position 152 (glutamate 152) interacts with Zn(2+). Helical transmembrane passes span 182–202, 203–223, and 236–256; these read ILGG…VVMA, AVMA…LMPL, and GVLC…TAGI.

Belongs to the ZIP transporter (TC 2.A.5) family. ZupT subfamily.

It localises to the cell inner membrane. It catalyses the reaction Zn(2+)(in) = Zn(2+)(out). Its function is as follows. Mediates zinc uptake. May also transport other divalent cations. This chain is Zinc transporter ZupT, found in Escherichia fergusonii (strain ATCC 35469 / DSM 13698 / CCUG 18766 / IAM 14443 / JCM 21226 / LMG 7866 / NBRC 102419 / NCTC 12128 / CDC 0568-73).